Here is a 147-residue protein sequence, read N- to C-terminus: Leghemoglobin (147 aa).

Positions 2 to 147 (GFTADQEALV…LASAIKKAMS (146 aa)) constitute a Globin domain. Nitrated tyrosine is present on residues Y25 and Y30. A heme b-binding site is contributed by S45. S45 bears the Phosphoserine mark. An O2-binding site is contributed by H62. K65, H94, and K97 together coordinate heme b. Residue Y135 is modified to Nitrated tyrosine.

It belongs to the plant globin family. In terms of assembly, monomer. Nitrated in effective nodules and particularly in hypoxic conditions; this mechanism may play a protective role in the symbiosis by buffering toxic peroxynitrite NO(2)(-). Nitration level decrease during nodule senescence. Post-translationally, phosphorylation at Ser-45 disrupts the molecular environment of its porphyrin ring oxygen binding pocket, thus leading to a reduced oxygen consumption and to the delivery of oxygen O(2) to symbiosomes. Root nodules.

The protein localises to the cytoplasm. It localises to the cytosol. Its subcellular location is the nucleus. In terms of biological role, leghemoglobin that reversibly binds oxygen O(2) through a pentacoordinated heme iron. In root nodules, facilitates the diffusion of oxygen to the bacteroids while preventing the bacterial nitrogenase from being inactivated by buffering dioxygen, nitric oxide and carbon monoxide, and promoting the formation of reactive oxygen species (ROS, e.g. H(2)O(2)). This role is essential for symbiotic nitrogen fixation (SNF). This is Leghemoglobin (LB3) from Medicago sativa (Alfalfa).